The chain runs to 271 residues: Putative phosphoenolpyruvate synthase regulatory protein (271 aa).

151-158 contributes to the ADP binding site; sequence GVSRSGKT.

Belongs to the pyruvate, phosphate/water dikinase regulatory protein family. PSRP subfamily.

It carries out the reaction [pyruvate, water dikinase] + ADP = [pyruvate, water dikinase]-phosphate + AMP + H(+). It catalyses the reaction [pyruvate, water dikinase]-phosphate + phosphate + H(+) = [pyruvate, water dikinase] + diphosphate. Bifunctional serine/threonine kinase and phosphorylase involved in the regulation of the phosphoenolpyruvate synthase (PEPS) by catalyzing its phosphorylation/dephosphorylation. This chain is Putative phosphoenolpyruvate synthase regulatory protein, found in Burkholderia lata (strain ATCC 17760 / DSM 23089 / LMG 22485 / NCIMB 9086 / R18194 / 383).